The following is a 341-amino-acid chain: MRLCLIPRNTGTPQRVLPPVVWSTPSRKKPVLSARNSMMFGHLSPMRIPHLRGKFNLQLPSLDEQVIPARLPKTEVRAEEPKEATEVKDQVETQEQEDNKRGPCSNGEAASTSRPLETQGNLTSSWYNPRPLEGNVHLKSLTEKNQTDKAQVHAVSFYSKGHGVASSHSPAGGILPFGRPDSLPTVLPAPVPGCSLWPEKAALKVLGKDYLPSSPGLLMVGEDMQPKDPAALGSSRSSPPKAAGHRSHKRKLSGPPLQLQPTPPLQLRWDRDEGPPPAKLPCLSPEALLVGQASQREGHLQQGNMHKNMRVLSRTSKFRRLRQLLRRRKKRRQGRCGGSRL.

Disordered regions lie at residues 70–131 and 218–279; these read RLPK…NPRP and LMVG…PPAK. Basic and acidic residues predominate over residues 72–101; it reads PKTEVRAEEPKEATEVKDQVETQEQEDNKR. Residues 108 to 127 show a composition bias toward polar residues; the sequence is EAASTSRPLETQGNLTSSWY. The segment covering 243 to 252 has biased composition (basic residues); it reads AGHRSHKRKL.

This sequence belongs to the UPF0607 family.

The sequence is that of Putative UPF0607 protein ENSP00000383144 from Homo sapiens (Human).